The primary structure comprises 353 residues: Photosystem II D2 protein (353 aa).

Position 2 is an N-acetylthreonine (threonine 2). Position 2 is a phosphothreonine (threonine 2). A helical transmembrane segment spans residues 41 to 61 (CAYFALGGWFTGTTFVTSWYT). Position 118 (histidine 118) interacts with chlorophyll a. The helical transmembrane segment at 125–141 (GFMLRQFELARSVQLRP) threads the bilayer. Pheophytin a-binding residues include glutamine 130 and asparagine 143. A helical membrane pass occupies residues 153–166 (VFVSVFLIYPLGQS). Residue histidine 198 participates in chlorophyll a binding. The helical transmembrane segment at 208-228 (AALLCAIHGATVENTLFEDGD) threads the bilayer. Histidine 215 and phenylalanine 262 together coordinate a plastoquinone. Histidine 215 contacts Fe cation. Histidine 269 contacts Fe cation. The chain crosses the membrane as a helical span at residues 279-295 (GLWMSALGVVGLALNLR).

This sequence belongs to the reaction center PufL/M/PsbA/D family. As to quaternary structure, PSII is composed of 1 copy each of membrane proteins PsbA, PsbB, PsbC, PsbD, PsbE, PsbF, PsbH, PsbI, PsbJ, PsbK, PsbL, PsbM, PsbT, PsbX, PsbY, PsbZ, Psb30/Ycf12, at least 3 peripheral proteins of the oxygen-evolving complex and a large number of cofactors. It forms dimeric complexes. The cofactor is The D1/D2 heterodimer binds P680, chlorophylls that are the primary electron donor of PSII, and subsequent electron acceptors. It shares a non-heme iron and each subunit binds pheophytin, quinone, additional chlorophylls, carotenoids and lipids. There is also a Cl(-1) ion associated with D1 and D2, which is required for oxygen evolution. The PSII complex binds additional chlorophylls, carotenoids and specific lipids..

The protein localises to the plastid. The protein resides in the chloroplast thylakoid membrane. It carries out the reaction 2 a plastoquinone + 4 hnu + 2 H2O = 2 a plastoquinol + O2. Functionally, photosystem II (PSII) is a light-driven water:plastoquinone oxidoreductase that uses light energy to abstract electrons from H(2)O, generating O(2) and a proton gradient subsequently used for ATP formation. It consists of a core antenna complex that captures photons, and an electron transfer chain that converts photonic excitation into a charge separation. The D1/D2 (PsbA/PsbD) reaction center heterodimer binds P680, the primary electron donor of PSII as well as several subsequent electron acceptors. D2 is needed for assembly of a stable PSII complex. This Nandina domestica (Heavenly bamboo) protein is Photosystem II D2 protein.